Consider the following 320-residue polypeptide: UPF0053 protein in cps region (320 aa).

Residues 4–24 (CLSFLLMIGFSLIAEGFSFII) traverse the membrane as a helical segment. CBS domains lie at 121–183 (MTSR…PLDL) and 186–244 (LVRQ…PNEV).

The protein belongs to the UPF0053 family.

Its subcellular location is the cell membrane. In Klebsiella pneumoniae, this protein is UPF0053 protein in cps region.